A 1029-amino-acid chain; its full sequence is Probable E3 ubiquitin protein ligase C167.07c (1029 aa).

An IQ domain is found at 46–75 (AENNSVAVQSLSRGFLARRKFKQDFRERWI). Residues 692-1029 (FGKLLKGPIR…VRSGVGFGFS (338 aa)) enclose the HECT domain. Residue Cys997 is the Glycyl thioester intermediate of the active site.

The protein resides in the cytoplasm. It is found in the nucleus. The enzyme catalyses S-ubiquitinyl-[E2 ubiquitin-conjugating enzyme]-L-cysteine + [acceptor protein]-L-lysine = [E2 ubiquitin-conjugating enzyme]-L-cysteine + N(6)-ubiquitinyl-[acceptor protein]-L-lysine.. Its function is as follows. Probable E3 ubiquitin-protein ligase which mediates ubiquitination and subsequent proteasomal degradation of target proteins. The protein is Probable E3 ubiquitin protein ligase C167.07c of Schizosaccharomyces pombe (strain 972 / ATCC 24843) (Fission yeast).